The sequence spans 510 residues: NAD(P)H-quinone oxidoreductase subunit 2 B, chloroplastic (510 aa).

Helical transmembrane passes span 24 to 44 (LLLFDGSFIFPECILIFGLIL), 57 to 77 (ISWFYFISSTSLVMSIVVLLF), 99 to 119 (IFQFLILLSSTLCIPLSVEYI), 124 to 144 (MAITEFLLFVLTATLGGMFLC), 149 to 169 (LITIFVAPECFSLCSYLLSGY), 183 to 203 (YLLMGGASSSILVHGFSWLYG), 227 to 247 (PGISIALIFITVGIGFKLSLA), 295 to 315 (WHLLLEILAILSMILGNLIAI), 323 to 343 (MLAYSSIGQIGYVIIGIIVGD), 354 to 374 (YMLFYISMNLGTFACIVSFGL), 395 to 415 (ALSLALCLLSLGGLPPLAGFF), 418 to 438 (LYLFWCGWQAGLYFLVSIGLL), and 482 to 502 (LSMIVCVIASTISGISMNPII).

The protein belongs to the complex I subunit 2 family. NDH is composed of at least 16 different subunits, 5 of which are encoded in the nucleus.

It localises to the plastid. It is found in the chloroplast thylakoid membrane. It catalyses the reaction a plastoquinone + NADH + (n+1) H(+)(in) = a plastoquinol + NAD(+) + n H(+)(out). The catalysed reaction is a plastoquinone + NADPH + (n+1) H(+)(in) = a plastoquinol + NADP(+) + n H(+)(out). Its function is as follows. NDH shuttles electrons from NAD(P)H:plastoquinone, via FMN and iron-sulfur (Fe-S) centers, to quinones in the photosynthetic chain and possibly in a chloroplast respiratory chain. The immediate electron acceptor for the enzyme in this species is believed to be plastoquinone. Couples the redox reaction to proton translocation, and thus conserves the redox energy in a proton gradient. This is NAD(P)H-quinone oxidoreductase subunit 2 B, chloroplastic from Lotus japonicus (Lotus corniculatus var. japonicus).